The primary structure comprises 143 residues: Transcriptional regulator MraZ (143 aa).

SpoVT-AbrB domains are found at residues 5 to 47 and 76 to 119; these read QYEH…SLEE and AVEC…SKEV.

Belongs to the MraZ family. Forms oligomers.

The protein localises to the cytoplasm. It localises to the nucleoid. The polypeptide is Transcriptional regulator MraZ (Thermoanaerobacter sp. (strain X514)).